The sequence spans 328 residues: 5,10-methylenetetrahydromethanopterin reductase (328 aa).

It belongs to the mer family.

The protein localises to the cytoplasm. The catalysed reaction is 5-methyl-5,6,7,8-tetrahydromethanopterin + oxidized coenzyme F420-(gamma-L-Glu)(n) + H(+) = 5,10-methylenetetrahydromethanopterin + reduced coenzyme F420-(gamma-L-Glu)(n). Its pathway is one-carbon metabolism; methanogenesis from CO(2); methyl-coenzyme M from 5,10-methylene-5,6,7,8-tetrahydromethanopterin: step 1/2. Its function is as follows. Catalyzes the reversible reduction of methylene-H(4)MPT to methyl-H(4)MPT. The chain is 5,10-methylenetetrahydromethanopterin reductase from Methanosarcina acetivorans (strain ATCC 35395 / DSM 2834 / JCM 12185 / C2A).